The sequence spans 380 residues: Queuine tRNA-ribosyltransferase (380 aa).

The active-site Proton acceptor is Asp89. Substrate contacts are provided by residues 89–93, Asp143, Gln187, and Gly214; that span reads DSGGF. The interval 245 to 251 is RNA binding; it reads GVGKPED. Asp264 (nucleophile) is an active-site residue. An RNA binding; important for wobble base 34 recognition region spans residues 269–273; that stretch reads TRNAR. 4 residues coordinate Zn(2+): Cys302, Cys304, Cys307, and His333.

Belongs to the queuine tRNA-ribosyltransferase family. In terms of assembly, homodimer. Within each dimer, one monomer is responsible for RNA recognition and catalysis, while the other monomer binds to the replacement base PreQ1. The cofactor is Zn(2+).

The enzyme catalyses 7-aminomethyl-7-carbaguanine + guanosine(34) in tRNA = 7-aminomethyl-7-carbaguanosine(34) in tRNA + guanine. The protein operates within tRNA modification; tRNA-queuosine biosynthesis. In terms of biological role, catalyzes the base-exchange of a guanine (G) residue with the queuine precursor 7-aminomethyl-7-deazaguanine (PreQ1) at position 34 (anticodon wobble position) in tRNAs with GU(N) anticodons (tRNA-Asp, -Asn, -His and -Tyr). Catalysis occurs through a double-displacement mechanism. The nucleophile active site attacks the C1' of nucleotide 34 to detach the guanine base from the RNA, forming a covalent enzyme-RNA intermediate. The proton acceptor active site deprotonates the incoming PreQ1, allowing a nucleophilic attack on the C1' of the ribose to form the product. After dissociation, two additional enzymatic reactions on the tRNA convert PreQ1 to queuine (Q), resulting in the hypermodified nucleoside queuosine (7-(((4,5-cis-dihydroxy-2-cyclopenten-1-yl)amino)methyl)-7-deazaguanosine). This Proteus mirabilis (strain HI4320) protein is Queuine tRNA-ribosyltransferase.